The sequence spans 152 residues: Transcription elongation factor Spt5 (152 aa).

The KOW domain maps to P99–V128.

This sequence belongs to the archaeal Spt5 family. As to quaternary structure, heterodimer composed of Spt4 and Spt5. Interacts with RNA polymerase (RNAP).

In terms of biological role, stimulates transcription elongation. The chain is Transcription elongation factor Spt5 from Saccharolobus solfataricus (strain ATCC 35092 / DSM 1617 / JCM 11322 / P2) (Sulfolobus solfataricus).